Here is a 365-residue protein sequence, read N- to C-terminus: Outer capsid protein sigma-3 (365 aa).

A CCHC-type zinc finger spans residues 51-73; sequence CMHCLGVVGSLQRKLKHLPHHKC.

This sequence belongs to the orthoreovirus sigma-3 protein family. In terms of assembly, heterohexamer of three sigma-3 and three Mu-1 proteins. The RNA-binding form is probably a homodimer. Cleaved during virus the endosomal proteolytic disassembly of the outer capsid.

The protein localises to the virion. It localises to the host cytoplasm. It is found in the host nucleus. Functionally, stimulates translation by blocking the activation of the dsRNA-dependent protein kinase EIF2AK2/PKR, thereby inhibiting the host interferon response. Sigma3 prevents the activation of EIF2AK2 by competing with the kinase for dsRNA-binding. In terms of biological role, the viral outer shell polypeptides, of which sigma-3 is one, impose structural constraints that prevent elongation of nascent transcripts by the RNA-dependent RNA polymerase lambda-3. This Mammalia (T2J) protein is Outer capsid protein sigma-3 (S4).